The following is a 197-amino-acid chain: Protein tyrosine phosphatase receptor type C-associated protein (197 aa).

The helical transmembrane segment at 33–53 (VVTIVLLLLLLLLLVTALALA) threads the bilayer. Phosphoserine occurs at positions 99 and 103. Disordered regions lie at residues 120-164 (GPEE…GSSA) and 177-197 (SAAW…VTAL). Positions 124-145 (AAAKEEEQRCQAEQTRDPRDTD) are enriched in basic and acidic residues.

As to quaternary structure, interacts with CD45/PTPRC. Post-translationally, phosphorylated on tyrosine residues. In terms of tissue distribution, leukocyte-specific. Expressed in B- and T-cell lines, in spleen, thymus, and bone marrow of adult mice, and in embryos.

The protein localises to the membrane. This Mus musculus (Mouse) protein is Protein tyrosine phosphatase receptor type C-associated protein (Ptprcap).